The chain runs to 417 residues: 4-hydroxy-3-methylbut-2-en-1-yl diphosphate synthase (flavodoxin) (417 aa).

Positions 304, 307, 350, and 357 each coordinate [4Fe-4S] cluster.

The protein belongs to the IspG family. The cofactor is [4Fe-4S] cluster.

It carries out the reaction (2E)-4-hydroxy-3-methylbut-2-enyl diphosphate + oxidized [flavodoxin] + H2O + 2 H(+) = 2-C-methyl-D-erythritol 2,4-cyclic diphosphate + reduced [flavodoxin]. Its pathway is isoprenoid biosynthesis; isopentenyl diphosphate biosynthesis via DXP pathway; isopentenyl diphosphate from 1-deoxy-D-xylulose 5-phosphate: step 5/6. Converts 2C-methyl-D-erythritol 2,4-cyclodiphosphate (ME-2,4cPP) into 1-hydroxy-2-methyl-2-(E)-butenyl 4-diphosphate. The sequence is that of 4-hydroxy-3-methylbut-2-en-1-yl diphosphate synthase (flavodoxin) from Rhizobium meliloti (strain 1021) (Ensifer meliloti).